Here is a 403-residue protein sequence, read N- to C-terminus: Large ribosomal subunit protein uL3 (403 aa).

Residues 1 to 37 are disordered; the sequence is MSHRKFSAPRHGSLGFLPRKRSSRHRGKVKSFPKDDP. S13 is modified (phosphoserine). Over residues 18-31 the composition is skewed to basic residues; sequence PRKRSSRHRGKVKS. Residue K39 forms a Glycyl lysine isopeptide (Lys-Gly) (interchain with G-Cter in SUMO2) linkage. The residue at position 136 (K136) is an N6-acetyllysine. Residues K224 and K226 each participate in a glycyl lysine isopeptide (Lys-Gly) (interchain with G-Cter in SUMO2) cross-link. A Tele-methylhistidine modification is found at H245. An N6-acetyllysine; alternate mark is found at K286 and K294. K286 is covalently cross-linked (Glycyl lysine isopeptide (Lys-Gly) (interchain with G-Cter in SUMO2); alternate). A Glycyl lysine isopeptide (Lys-Gly) (interchain with G-Cter in SUMO1); alternate cross-link involves residue K294. S304 carries the phosphoserine modification. K366 carries the post-translational modification N6-acetyllysine; alternate. K366 participates in a covalent cross-link: Glycyl lysine isopeptide (Lys-Gly) (interchain with G-Cter in SUMO2); alternate. K373 bears the N6-acetyllysine mark. Glycyl lysine isopeptide (Lys-Gly) (interchain with G-Cter in SUMO2) cross-links involve residues K386, K393, and K399.

This sequence belongs to the universal ribosomal protein uL3 family. As to quaternary structure, component of the large ribosomal subunit. Interacts with DHX33. Constitutively monomethylated at His-245 by METTL18. Methylation at His-245 regulates translation elongation by slowing ribosome traversal on tyrosine codons: slower elongation provides enough time for proper folding of synthesized proteins and prevents cellular aggregation of tyrosine-rich proteins. It is not required for incorporation of RPL3 into ribosomes.

It localises to the nucleus. Its subcellular location is the nucleolus. The protein localises to the cytoplasm. Component of the large ribosomal subunit. The ribosome is a large ribonucleoprotein complex responsible for the synthesis of proteins in the cell. The sequence is that of Large ribosomal subunit protein uL3 (RPL3) from Homo sapiens (Human).